A 396-amino-acid chain; its full sequence is Activity-regulated cytoskeleton-associated protein (396 aa).

The stretch at Ser54–Tyr78 forms a coiled coil. The interaction with SH3GL1 or SH3GL3 stretch occupies residues Lys89–Glu100. Positions Pro177–Pro207 are disordered. The tract at residues Gln195–Phe214 is interaction with DNM2. Ser260 carries the phosphoserine; by CaMK2 modification. Glycyl lysine isopeptide (Lys-Gly) (interchain with G-Cter in ubiquitin) cross-links involve residues Lys268 and Lys269. Thr278 carries the phosphothreonine modification. A disordered region spans residues Gln356–Glu396. Residues Ala382–Glu396 show a composition bias toward polar residues.

The protein belongs to the ARC/ARG3.1 family. In terms of assembly, homooligomer; homooligomerizes into virion-like capsids. Interacts with SH3GL1/endophilin-2, SH3GL3/endophilin-3 and DNM2/DYN2. Interacts with CAMK2B (in the kinase inactive state); leading to target ARC to inactive synapses. Interacts with PSEN1. Interacts with GRIN2A and GRIN2B; inhibiting homooligomerization. Ubiquitinated by UBE3A, leading to its degradation by the proteasome, thereby promoting AMPA receptors (AMPARs) expression at synapses. Ubiquitinated by RNF216 at Lys-268 and Lys-269 limiting ARC protein levels induced by synaptic activity and thus regulating ARC-dependent forms of synaptic plasticity. In terms of processing, palmitoylation anchors the protein into the membrane by allowing direct insertion into the hydrophobic core of the lipid bilayer. Post-translationally, phosphorylation at Ser-260 by CaMK2 prevents homooligomerization into virion-like capsids by disrupting an interaction surface essential for high-order oligomerization. Phosphorylation by CaMK2 inhibits synaptic activity. Expressed in brain and testis. In primary visual cortex, detected in all cortical layers with the exception of layer 5: present at highest level in layers 2/3 and 4, the predominant sites of ocular dominance plasticity (at protein level). Also expressed in skin-migratory dendritic cells.

Its subcellular location is the extracellular vesicle membrane. It localises to the postsynaptic cell membrane. It is found in the synapse. The protein localises to the postsynaptic density. The protein resides in the early endosome membrane. Its subcellular location is the cell projection. It localises to the dendrite. It is found in the cytoplasm. The protein localises to the cytoskeleton. The protein resides in the cell cortex. Its subcellular location is the dendritic spine. It localises to the cytoplasmic vesicle. It is found in the secretory vesicle. The protein localises to the acrosome. The protein resides in the clathrin-coated vesicle membrane. Master regulator of synaptic plasticity that self-assembles into virion-like capsids that encapsulate RNAs and mediate intercellular RNA transfer in the nervous system. ARC protein is released from neurons in extracellular vesicles that mediate the transfer of ARC mRNA into new target cells, where ARC mRNA can undergo activity-dependent translation. ARC capsids are endocytosed and are able to transfer ARC mRNA into the cytoplasm of neurons. Acts as a key regulator of synaptic plasticity: required for protein synthesis-dependent forms of long-term potentiation (LTP) and depression (LTD) and for the formation of long-term memory. Regulates synaptic plasticity by promoting endocytosis of AMPA receptors (AMPARs) in response to synaptic activity: this endocytic pathway maintains levels of surface AMPARs in response to chronic changes in neuronal activity through synaptic scaling, thereby contributing to neuronal homeostasis. Acts as a postsynaptic mediator of activity-dependent synapse elimination in the developing cerebellum by mediating elimination of surplus climbing fiber synapses. Accumulates at weaker synapses, probably to prevent their undesired enhancement. This suggests that ARC-containing virion-like capsids may be required to eliminate synaptic material. Required to transduce experience into long-lasting changes in visual cortex plasticity and for long-term memory. Involved in postsynaptic trafficking and processing of amyloid-beta A4 (APP) via interaction with PSEN1. In addition to its role in synapses, also involved in the regulation of the immune system: specifically expressed in skin-migratory dendritic cells and regulates fast dendritic cell migration, thereby regulating T-cell activation. The sequence is that of Activity-regulated cytoskeleton-associated protein from Mus musculus (Mouse).